Consider the following 327-residue polypeptide: Tetraacyldisaccharide 4'-kinase (327 aa).

54-61 (TTGGTGKT) provides a ligand contact to ATP. The interval 78–106 (PHILSRGHGGRERGPIGVNPNRSTPRDVG) is disordered.

Belongs to the LpxK family.

The catalysed reaction is a lipid A disaccharide + ATP = a lipid IVA + ADP + H(+). The protein operates within glycolipid biosynthesis; lipid IV(A) biosynthesis; lipid IV(A) from (3R)-3-hydroxytetradecanoyl-[acyl-carrier-protein] and UDP-N-acetyl-alpha-D-glucosamine: step 6/6. Functionally, transfers the gamma-phosphate of ATP to the 4'-position of a tetraacyldisaccharide 1-phosphate intermediate (termed DS-1-P) to form tetraacyldisaccharide 1,4'-bis-phosphate (lipid IVA). The sequence is that of Tetraacyldisaccharide 4'-kinase from Gluconobacter oxydans (strain 621H) (Gluconobacter suboxydans).